Reading from the N-terminus, the 164-residue chain is ATP synthase subunit b (164 aa).

The helical transmembrane segment at 7–25 (SFWLAVSFIIFVYLIYRPA) threads the bilayer.

It belongs to the ATPase B chain family. As to quaternary structure, F-type ATPases have 2 components, F(1) - the catalytic core - and F(0) - the membrane proton channel. F(1) has five subunits: alpha(3), beta(3), gamma(1), delta(1), epsilon(1). F(0) has three main subunits: a(1), b(2) and c(10-14). The alpha and beta chains form an alternating ring which encloses part of the gamma chain. F(1) is attached to F(0) by a central stalk formed by the gamma and epsilon chains, while a peripheral stalk is formed by the delta and b chains.

Its subcellular location is the cell inner membrane. Functionally, f(1)F(0) ATP synthase produces ATP from ADP in the presence of a proton or sodium gradient. F-type ATPases consist of two structural domains, F(1) containing the extramembraneous catalytic core and F(0) containing the membrane proton channel, linked together by a central stalk and a peripheral stalk. During catalysis, ATP synthesis in the catalytic domain of F(1) is coupled via a rotary mechanism of the central stalk subunits to proton translocation. In terms of biological role, component of the F(0) channel, it forms part of the peripheral stalk, linking F(1) to F(0). This chain is ATP synthase subunit b, found in Rickettsia felis (strain ATCC VR-1525 / URRWXCal2) (Rickettsia azadi).